We begin with the raw amino-acid sequence, 591 residues long: Aspartate--tRNA ligase (591 aa).

Glu-173 contributes to the L-aspartate binding site. The tract at residues 197–200 is aspartate; it reads QLFK. Position 219 (Arg-219) interacts with L-aspartate. ATP-binding positions include 219 to 221 and Gln-228; that span reads RDE. His-448 contributes to the L-aspartate binding site. Glu-482 serves as a coordination point for ATP. Residue Arg-489 participates in L-aspartate binding. 534-537 provides a ligand contact to ATP; sequence GLDR.

Belongs to the class-II aminoacyl-tRNA synthetase family. Type 1 subfamily. In terms of assembly, homodimer.

It localises to the cytoplasm. It carries out the reaction tRNA(Asp) + L-aspartate + ATP = L-aspartyl-tRNA(Asp) + AMP + diphosphate. In terms of biological role, catalyzes the attachment of L-aspartate to tRNA(Asp) in a two-step reaction: L-aspartate is first activated by ATP to form Asp-AMP and then transferred to the acceptor end of tRNA(Asp). The chain is Aspartate--tRNA ligase from Shewanella oneidensis (strain ATCC 700550 / JCM 31522 / CIP 106686 / LMG 19005 / NCIMB 14063 / MR-1).